The following is a 308-amino-acid chain: Testis-specific Y-encoded protein 3 (308 aa).

It belongs to the nucleosome assembly protein (NAP) family.

The protein resides in the cytoplasm. It is found in the nucleus. Its function is as follows. May be involved in sperm differentiation and proliferation. This is Testis-specific Y-encoded protein 3 (TSPY3) from Homo sapiens (Human).